The chain runs to 290 residues: Large ribosomal subunit protein uL2m (290 aa).

This sequence belongs to the universal ribosomal protein uL2 family. In terms of assembly, probably part of the large ribosomal subunit.

It localises to the hydrogenosome. This chain is Large ribosomal subunit protein uL2m (rpl2), found in Nyctotherus ovalis.